A 201-amino-acid chain; its full sequence is Thiamine transporter ThiT (201 aa).

Transmembrane regions (helical) follow at residues 7–27 (LVVI…TYIP), 29–49 (TTGV…VLAM), 53–73 (LVPA…LRGI), 85–105 (ILEY…FASF), 124–144 (GIII…VVFW), and 170–190 (TVLT…LFVA).

This sequence belongs to the vitamin uptake transporter (VUT/ECF) (TC 2.A.88) family. Thiamine transporter subfamily. In Lactococcus lactis subsp. cremoris (strain NZ9000) forms a stable energy-coupling factor (ECF) transporter complex probably composed of a membrane-embedded substrate-binding protein (S component), two ATP-binding proteins (A components) and a transmembrane protein (T component).

The protein resides in the cell membrane. Thiamine-binding protein that interacts with the energy-coupling factor (ECF) ABC-transporter complex. Unlike classic ABC transporters this ECF transporter provides the energy necessary to transport a number of different substrates. The substrates themselves are bound by transmembrane, not extracytoplasmic soluble proteins and transport it into cells. Binds thiamine with a dissociation constant of 0.5 nM. Upon coexpression with its energy-coupling factor (ECF) ABC-transporter complex EcfA1A2T in Lactococcus lactis subsp. cremoris (strain NZ9000) allows thiamine uptake; uptake requires both ThiT and EcfA1A2T. This is Thiamine transporter ThiT (thiT) from Lacticaseibacillus paracasei (strain ATCC 334 / BCRC 17002 / CCUG 31169 / CIP 107868 / KCTC 3260 / NRRL B-441) (Lactobacillus paracasei).